The sequence spans 387 residues: 1-deoxy-D-xylulose 5-phosphate reductoisomerase (387 aa).

NADPH contacts are provided by Thr-10, Gly-11, Ser-12, Ile-13, Gly-36, Lys-37, Asn-38, and Asn-123. Lys-124 provides a ligand contact to 1-deoxy-D-xylulose 5-phosphate. Glu-125 provides a ligand contact to NADPH. Mn(2+) is bound at residue Asp-149. Positions 150, 151, 175, and 198 each coordinate 1-deoxy-D-xylulose 5-phosphate. Glu-151 is a Mn(2+) binding site. Gly-204 contacts NADPH. 1-deoxy-D-xylulose 5-phosphate-binding residues include Ser-211, Asn-216, Lys-217, and Glu-220. Mn(2+) is bound at residue Glu-220.

This sequence belongs to the DXR family. Requires Mg(2+) as cofactor. Mn(2+) is required as a cofactor.

It catalyses the reaction 2-C-methyl-D-erythritol 4-phosphate + NADP(+) = 1-deoxy-D-xylulose 5-phosphate + NADPH + H(+). It functions in the pathway isoprenoid biosynthesis; isopentenyl diphosphate biosynthesis via DXP pathway; isopentenyl diphosphate from 1-deoxy-D-xylulose 5-phosphate: step 1/6. Catalyzes the NADPH-dependent rearrangement and reduction of 1-deoxy-D-xylulose-5-phosphate (DXP) to 2-C-methyl-D-erythritol 4-phosphate (MEP). The sequence is that of 1-deoxy-D-xylulose 5-phosphate reductoisomerase from Pelotomaculum thermopropionicum (strain DSM 13744 / JCM 10971 / SI).